A 175-amino-acid chain; its full sequence is ATP-dependent protease subunit HslV (175 aa).

Residue T2 is part of the active site. G158, C161, and T164 together coordinate Na(+).

It belongs to the peptidase T1B family. HslV subfamily. In terms of assembly, a double ring-shaped homohexamer of HslV is capped on each side by a ring-shaped HslU homohexamer. The assembly of the HslU/HslV complex is dependent on binding of ATP.

Its subcellular location is the cytoplasm. The catalysed reaction is ATP-dependent cleavage of peptide bonds with broad specificity.. Its activity is regulated as follows. Allosterically activated by HslU binding. Functionally, protease subunit of a proteasome-like degradation complex believed to be a general protein degrading machinery. In Haemophilus influenzae (strain PittGG), this protein is ATP-dependent protease subunit HslV.